The sequence spans 258 residues: UPF0246 protein YaaA (258 aa).

Belongs to the UPF0246 family.

The polypeptide is UPF0246 protein YaaA (Escherichia coli O6:K15:H31 (strain 536 / UPEC)).